The primary structure comprises 87 residues: U18-myrmicitoxin-Mri1a (87 aa).

An N-terminal signal peptide occupies residues 1–32; it reads MKNNYNRINTFIVYLMVTFSLISIISITECTP. Residues 33-77 enclose the EGF-like domain; the sequence is NHDPCPPQYAEALCLNGGTCFSVTIMGSDNYNCICAPGFRGWRCQ. Disulfide bonds link C37/C52, C46/C65, and C67/C76.

Post-translationally, O-glycosylated. In terms of tissue distribution, expressed by the venom gland.

It is found in the secreted. This Manica rubida (European giant red ant) protein is U18-myrmicitoxin-Mri1a.